Reading from the N-terminus, the 548-residue chain is MATTGTTSMPAPVFHPTVWGDYFIKFVPEPLQVSDETMAERIRHLREEVSGMFQACKNVVDKTNLVDVVQRLGIDHHFEEQIATALASIHSAGLFNSSSLHEAALRFRLLRQQGFWVPADELVKFIKNEDGSFIDGITNDPKGLLSLYNAAHLVTHDEGTTTLEDAIAFARQHLEAARRCSLKSPLAEQVGRALGIPLPRTLKREEAIAFIPEYSSQQDQQVYSPVILELAKLDFNLLQHLHQEELKEISQWWKDLSGEIGLGYVRDRIVECYFWSYTVHYERGQARARMILAKVFMLTSLLDDTYDVHATLEEARELNKAIQRWDESDVSLLPEYLKKFFVKVISNFREFEDELESHEKYRNVYNIKGFQTLSKHYLQEAEWFHHGCTPSFKDQVNVSVITGGAQVLSIGLLVGMGHEATREAFEWAIGDTDAIWACGEVSRFMDDMSAFKNGRNKMDVASSVECYIKEHNVPSEVALARINSLVEDAWKTINQAPFKYPALFPVVQRVTSLAKSMTLLFLDKRDAYTYSKDFQTTLETHFVRHIPL.

Mg(2+) contacts are provided by D303 and D307. Substrate contacts are provided by D303, D307, and R443. Residues 303 to 307 (DDTYD) carry the DDXXD motif motif.

It belongs to the terpene synthase family. In terms of assembly, monomer. The cofactor is Mg(2+). It depends on Mn(2+) as a cofactor. Constitutively expressed in aerial tissues, but barely observed in roots.

Its subcellular location is the cytoplasm. It carries out the reaction (2E,6E)-farnesyl diphosphate + H2O = tau-cadinol + diphosphate. It functions in the pathway secondary metabolite biosynthesis; terpenoid biosynthesis. Functionally, sesquiterpene synthase that catalyzes the formation of a blend of sesquiterpenes and sesquiterpenoid alcohols. Converts farnesyl diphosphate to tau-cadinol. In Zea mays (Maize), this protein is Tau-cadinol synthase.